The primary structure comprises 362 residues: Peptide chain release factor 1 (362 aa).

The residue at position 235 (glutamine 235) is an N5-methylglutamine.

It belongs to the prokaryotic/mitochondrial release factor family. In terms of processing, methylated by PrmC. Methylation increases the termination efficiency of RF1.

The protein resides in the cytoplasm. Peptide chain release factor 1 directs the termination of translation in response to the peptide chain termination codons UAG and UAA. In Buchnera aphidicola subsp. Baizongia pistaciae (strain Bp), this protein is Peptide chain release factor 1.